Reading from the N-terminus, the 177-residue chain is Endoribonuclease YbeY (177 aa).

Residues H142, H146, and H152 each contribute to the Zn(2+) site.

This sequence belongs to the endoribonuclease YbeY family. Zn(2+) is required as a cofactor.

The protein localises to the cytoplasm. Its function is as follows. Single strand-specific metallo-endoribonuclease involved in late-stage 70S ribosome quality control and in maturation of the 3' terminus of the 16S rRNA. The protein is Endoribonuclease YbeY of Synechococcus sp. (strain CC9311).